The following is a 336-amino-acid chain: MAEGGTGPDGRAGPGPAGPNLKEWLREQFCDHPLEHCDDTRLHDAAYVGDLQTLRNLLQEESYRSRINEKSVWCCGWLPCTPLRIAATAGHGNCVDFLIRKGAEVDLVDVKGQTALYVAVVNGHLESTEILLEAGADPNGSRHHRSTPVYHASRVGRDDILKALIRYGADVDVNHHLTPDTRPPFSRRLTSLVVCPLYISAAYHNLQCFRLLLQAGANPDFNCNGPVNTQEFYRGSPGCVMDAVLRHGCEAAFVSLLVEFGANLNLVKWESLGPEARGRRKMDPEALQVFKEARSIPRTLLSLCRVAVRRALGKYRLHLVPSLPLPDPIKKFLLYE.

ANK repeat units follow at residues 37–69 (CDDT…RINE), 78–107 (LPCT…EVDL), 111–140 (KGQT…DPNG), 144–173 (HRST…DVDV), 192–221 (LVVC…NPDF), and 236–266 (SPGC…NLNL). The region spanning 287–336 (LQVFKEARSIPRTLLSLCRVAVRRALGKYRLHLVPSLPLPDPIKKFLLYE) is the SOCS box domain.

This sequence belongs to the ankyrin SOCS box (ASB) family. As to quaternary structure, interacts with CUL5 and RNF7. As to expression, highest expression in testis, spleen, bone marrow and salivary gland.

The protein operates within protein modification; protein ubiquitination. Probable substrate-recognition component of a SCF-like ECS (Elongin-Cullin-SOCS-box protein) E3 ligase complex which mediates the ubiquitination and subsequent proteasomal degradation of target proteins. Mediates Notch-induced ubiquitination and degradation of TCF3/E2A and JAK2. May play a role in testis development. The protein is Ankyrin repeat and SOCS box protein 1 (Asb1) of Mus musculus (Mouse).